The chain runs to 187 residues: UPF0301 protein PBPRA3139 (187 aa).

The protein belongs to the UPF0301 (AlgH) family.

This is UPF0301 protein PBPRA3139 from Photobacterium profundum (strain SS9).